A 649-amino-acid polypeptide reads, in one-letter code: DNA mismatch repair protein MutL (649 aa).

It belongs to the DNA mismatch repair MutL/HexB family.

This protein is involved in the repair of mismatches in DNA. It is required for dam-dependent methyl-directed DNA mismatch repair. May act as a 'molecular matchmaker', a protein that promotes the formation of a stable complex between two or more DNA-binding proteins in an ATP-dependent manner without itself being part of a final effector complex. The chain is DNA mismatch repair protein MutL from Streptococcus pneumoniae serotype 2 (strain D39 / NCTC 7466).